Consider the following 294-residue polypeptide: Survival motor neuron protein (294 aa).

Gly residues predominate over residues 1-12 (MAMSSGGSGGGV). Residues 1-32 (MAMSSGGSGGGVPEQEDSVLFRRGTGQSDDSD) form a disordered region. At Ala2 the chain carries N-acetylalanine. Residues Ser4, Ser5, and Ser8 each carry the phosphoserine; by PKA modification. Residues 13-44 (PEQEDSVLFRRGTGQSDDSDIWDDTALIKAYD) form a P1 (binding site for GEMIN2) region. Thr25 carries the phosphothreonine modification. Residues Ser28 and Ser31 each carry the phosphoserine modification. A Glycyl lysine isopeptide (Lys-Gly) (interchain with G-Cter in SUMO2) cross-link involves residue Lys51. A disordered region spans residues 58-88 (DICETSGKPKTTPKRKPAKKNKSQKKNTAAP). The span at 68–82 (TTPKRKPAKKNKSQK) shows a compositional bias: basic residues. Thr69 carries the post-translational modification Phosphothreonine. Thr85 bears the Phosphothreonine; by PKA mark. The region spanning 91-151 (QWKVGDKCSA…LSPISEVANN (61 aa)) is the Tudor domain. Residues 97 to 209 (KCSAIWSEDG…MPGPRLGPGK (113 aa)) form a required for interaction with RPP20/POP7 region. Residues 156–166 (AQENENESQVS) show a composition bias toward low complexity. The disordered stretch occupies residues 156 to 222 (AQENENESQV…KFNGPPPPPP (67 aa)). Ser187 is subject to Phosphoserine; by PKA. Over residues 194 to 204 (LPPPPPMPGPR) the composition is skewed to pro residues. Lys209 participates in a covalent cross-link: Glycyl lysine isopeptide (Lys-Gly) (interchain with G-Cter in SUMO2). Positions 240 to 267 (PPIIPPPPPICPDSLDDADALGSMLISW) are P2 (binding site for SM B). Residues 279–294 (GFRQNQKEGRCSHSLN) are required for interaction with SYNCRIP.

Belongs to the SMN family. As to quaternary structure, homooligomer; may form higher order homooligomers in the dimer to octamer range. Part of the core SMN complex that contains SMN1, GEMIN2/SIP1, DDX20/GEMIN3, GEMIN4, GEMIN5, GEMIN6, GEMIN7, GEMIN8 and STRAP/UNRIP. Part of the SMN-Sm complex that contains SMN1, GEMIN2/SIP1, DDX20/GEMIN3, GEMIN4, GEMIN5, GEMIN6, GEMIN7, GEMIN8, STRAP/UNRIP and the Sm proteins SNRPB, SNRPD1, SNRPD2, SNRPD3, SNRPE, SNRPF and SNRPG. Component of an import snRNP complex composed of KPNB1, RNUT1, SMN1 and ZNF259. Interacts with DDX20, FBL, NOLA1, RNUT1, SYNCRIP and with several spliceosomal snRNP core Sm proteins, including SNRPB, SNRPD1, SNRPD2, SNRPD3, SNRPE and ILF3. Interacts with GEMIN2; the interaction is direct. Interacts with GEMIN3; the interaction is direct. Interacts with GEMIN8; the interaction is direct. Interacts with SNRPB; the interaction is direct. Interacts (via Tudor domain) with SNRPD1 (via C-terminus); the interaction is direct. Interacts with SNRPD2; the interaction is direct. Interacts (via Tudor domain) with SNRPD3 (via C-terminus); the interaction is direct. Interacts with SNRPE; the interaction is direct. Interacts with OSTF1, LSM10, LSM11 and RPP20/POP7. Interacts (via C-terminal region) with ZPR1 (via C-terminal region). Interacts (via Tudor domain) with COIL. Interacts with SETX; recruits SETX to POLR2A. Interacts with POLR2A (via the C-terminal domain (CTD)). Interacts with PRMT5. Interacts with XRN2. Interacts (via C-terminus) with FMR1 (via C-terminus); the interaction is direct and occurs in a RNA-independent manner. Interacts (via Tudor domain) with SF3B2 ('Arg-508'-methylated form). Interacts with WRAP53/TCAB1. Interacts (via Tudor domain) with ELAVL4 in an RNA-independent manner; the interaction is required for localization of ELAVL4 to RNA granules. Interacts with FRG1.

It is found in the nucleus. The protein resides in the gem. It localises to the cajal body. The protein localises to the cytoplasm. Its subcellular location is the cytoplasmic granule. It is found in the perikaryon. The protein resides in the cell projection. It localises to the neuron projection. The protein localises to the axon. Its subcellular location is the myofibril. It is found in the sarcomere. The protein resides in the z line. In terms of biological role, the SMN complex catalyzes the assembly of small nuclear ribonucleoproteins (snRNPs), the building blocks of the spliceosome, and thereby plays an important role in the splicing of cellular pre-mRNAs. Most spliceosomal snRNPs contain a common set of Sm proteins SNRPB, SNRPD1, SNRPD2, SNRPD3, SNRPE, SNRPF and SNRPG that assemble in a heptameric protein ring on the Sm site of the small nuclear RNA to form the core snRNP (Sm core). In the cytosol, the Sm proteins SNRPD1, SNRPD2, SNRPE, SNRPF and SNRPG are trapped in an inactive 6S pICln-Sm complex by the chaperone CLNS1A that controls the assembly of the core snRNP. To assemble core snRNPs, the SMN complex accepts the trapped 5Sm proteins from CLNS1A forming an intermediate. Binding of snRNA inside 5Sm ultimately triggers eviction of the SMN complex, thereby allowing binding of SNRPD3 and SNRPB to complete assembly of the core snRNP. Within the SMN complex, SMN1 acts as a structural backbone and together with GEMIN2 it gathers the Sm complex subunits. Ensures the correct splicing of U12 intron-containing genes that may be important for normal motor and proprioceptive neurons development. Also required for resolving RNA-DNA hybrids created by RNA polymerase II, that form R-loop in transcription terminal regions, an important step in proper transcription termination. May also play a role in the metabolism of small nucleolar ribonucleoprotein (snoRNPs). This is Survival motor neuron protein (SMN1) from Macaca fascicularis (Crab-eating macaque).